Consider the following 88-residue polypeptide: Putative defensin-like protein 264 (88 aa).

The signal sequence occupies residues 1–26 (MEKMVLRKVVLLAILLSLSCLWVAKA). 3 disulfides stabilise this stretch: C47-C65, C53-C70, and C57-C72.

This sequence belongs to the DEFL family.

It localises to the secreted. The protein is Putative defensin-like protein 264 of Arabidopsis thaliana (Mouse-ear cress).